Reading from the N-terminus, the 475-residue chain is Sulfate adenylyltransferase subunit 1 (475 aa).

Residues 25 to 239 (KSLLRFLTCG…EVLETVEIQR (215 aa)) enclose the tr-type G domain. The tract at residues 34–41 (GSVDDGKS) is G1. 34 to 41 (GSVDDGKS) serves as a coordination point for GTP. The segment at 92-96 (GITID) is G2. A G3 region spans residues 113-116 (DTPG). GTP contacts are provided by residues 113-117 (DTPGH) and 168-171 (NKMD). The interval 168–171 (NKMD) is G4. The interval 206–208 (SAL) is G5.

The protein belongs to the TRAFAC class translation factor GTPase superfamily. Classic translation factor GTPase family. CysN/NodQ subfamily. Heterodimer composed of CysD, the smaller subunit, and CysN.

It catalyses the reaction sulfate + ATP + H(+) = adenosine 5'-phosphosulfate + diphosphate. It functions in the pathway sulfur metabolism; hydrogen sulfide biosynthesis; sulfite from sulfate: step 1/3. With CysD forms the ATP sulfurylase (ATPS) that catalyzes the adenylation of sulfate producing adenosine 5'-phosphosulfate (APS) and diphosphate, the first enzymatic step in sulfur assimilation pathway. APS synthesis involves the formation of a high-energy phosphoric-sulfuric acid anhydride bond driven by GTP hydrolysis by CysN coupled to ATP hydrolysis by CysD. The sequence is that of Sulfate adenylyltransferase subunit 1 from Escherichia coli (strain SE11).